We begin with the raw amino-acid sequence, 336 residues long: Phosphate acetyltransferase (336 aa).

Belongs to the phosphate acetyltransferase and butyryltransferase family.

The protein resides in the cytoplasm. The enzyme catalyses acetyl-CoA + phosphate = acetyl phosphate + CoA. The protein operates within metabolic intermediate biosynthesis; acetyl-CoA biosynthesis; acetyl-CoA from acetate: step 2/2. The polypeptide is Phosphate acetyltransferase (pta) (Treponema pallidum (strain Nichols)).